Consider the following 101-residue polypeptide: Ubiquitin-related modifier 1 (101 aa).

A 1-thioglycine modification is found at glycine 101. Glycine 101 participates in a covalent cross-link: Glycyl lysine isopeptide (Gly-Lys) (interchain with K-? in acceptor proteins).

The protein belongs to the URM1 family. In terms of processing, C-terminal thiocarboxylation occurs in 2 steps, it is first acyl-adenylated (-COAMP) via the hesA/moeB/thiF part of UBA4, then thiocarboxylated (-COSH) via the rhodanese domain of UBA4.

It localises to the cytoplasm. The protein operates within tRNA modification; 5-methoxycarbonylmethyl-2-thiouridine-tRNA biosynthesis. Acts as a sulfur carrier required for 2-thiolation of mcm(5)S(2)U at tRNA wobble positions of cytosolic tRNA(Lys), tRNA(Glu) and tRNA(Gln). Serves as sulfur donor in tRNA 2-thiolation reaction by being thiocarboxylated (-COSH) at its C-terminus by the MOCS3 homolog UBA4. The sulfur is then transferred to tRNA to form 2-thiolation of mcm(5)S(2)U. Prior mcm(5) tRNA modification by the elongator complex is required for 2-thiolation. Also acts as a ubiquitin-like protein (UBL) that is covalently conjugated via an isopeptide bond to lysine residues of target proteins such as AHP1. The thiocarboxylated form serves as substrate for conjugation and oxidative stress specifically induces the formation of UBL-protein conjugates. The chain is Ubiquitin-related modifier 1 from Candida albicans (strain SC5314 / ATCC MYA-2876) (Yeast).